Consider the following 80-residue polypeptide: Phage shock protein G (80 aa).

Helical transmembrane passes span 5–25 (LFVI…LGII) and 41–61 (LALM…VWVI).

The protein localises to the cell inner membrane. Functionally, effector of the phage shock response. The sequence is that of Phage shock protein G (pspG) from Escherichia coli (strain K12).